We begin with the raw amino-acid sequence, 350 residues long: Phenylalanine--tRNA ligase alpha subunit (350 aa).

E257 contacts Mg(2+).

The protein belongs to the class-II aminoacyl-tRNA synthetase family. Phe-tRNA synthetase alpha subunit type 1 subfamily. In terms of assembly, tetramer of two alpha and two beta subunits. Requires Mg(2+) as cofactor.

Its subcellular location is the cytoplasm. It catalyses the reaction tRNA(Phe) + L-phenylalanine + ATP = L-phenylalanyl-tRNA(Phe) + AMP + diphosphate + H(+). The sequence is that of Phenylalanine--tRNA ligase alpha subunit from Listeria welshimeri serovar 6b (strain ATCC 35897 / DSM 20650 / CCUG 15529 / CIP 8149 / NCTC 11857 / SLCC 5334 / V8).